A 134-amino-acid polypeptide reads, in one-letter code: MINLLVENNNSNWDKIFSFVFDIFLFIFDVIWNTKLPMTNTSIAYFLIFFMVIKLSIYAIHGTSTQYNNLGSTVNNGVSQVYSSTVRGVSDTKQGMQKHIKERKQFKINRNKKQLSSLAKQAKTREQGYRRVHK.

2 helical membrane passes run 16-36 (IFSF…NTKL) and 43-63 (IAYF…IHGT).

The protein belongs to the plectrovirus ORF5 family.

It localises to the host membrane. This is an uncharacterized protein from Spiroplasma citri (SpV1).